The sequence spans 229 residues: Putative germin-like protein subfamily 1 member 2 (229 aa).

The first 24 residues, 1–24, serve as a signal peptide directing secretion; that stretch reads MKGLVQFLVAKIILLVLASTFVHC. A disulfide bond links Cys-34 and Cys-50. 2 N-linked (GlcNAc...) asparagine glycosylation sites follow: Asn-38 and Asn-71. The Cupin type-1 domain maps to 64–215; it reads SGLNIPGNTS…AFALDVNIVR (152 aa). Residues His-112 and His-114 each coordinate Mn(2+). N-linked (GlcNAc...) asparagine glycosylation occurs at Asn-139. Mn(2+) is bound at residue His-163.

It belongs to the germin family. As to quaternary structure, oligomer (believed to be a pentamer but probably hexamer).

It localises to the secreted. The protein localises to the extracellular space. Its subcellular location is the apoplast. May play a role in plant defense. Probably has no oxalate oxidase activity even if the active site is conserved. In Arabidopsis thaliana (Mouse-ear cress), this protein is Putative germin-like protein subfamily 1 member 2.